Consider the following 157-residue polypeptide: Transmembrane protein 42 (157 aa).

The next 4 helical transmembrane spans lie at F37–A57, I67–F87, I100–L120, and C124–H144.

The protein localises to the membrane. This chain is Transmembrane protein 42 (Tmem42), found in Mus musculus (Mouse).